The chain runs to 279 residues: Phosphate import ATP-binding protein PstB 2 (279 aa).

In terms of domain architecture, ABC transporter spans Phe34–Val274. Gly66 to Ser73 contributes to the ATP binding site.

This sequence belongs to the ABC transporter superfamily. Phosphate importer (TC 3.A.1.7) family. In terms of assembly, the complex is composed of two ATP-binding proteins (PstB), two transmembrane proteins (PstC and PstA) and a solute-binding protein (PstS).

It localises to the cell inner membrane. The catalysed reaction is phosphate(out) + ATP + H2O = ADP + 2 phosphate(in) + H(+). Its function is as follows. Part of the ABC transporter complex PstSACB involved in phosphate import. Responsible for energy coupling to the transport system. The sequence is that of Phosphate import ATP-binding protein PstB 2 from Vibrio vulnificus (strain YJ016).